Reading from the N-terminus, the 459-residue chain is GTPase Der (459 aa).

EngA-type G domains lie at 4 to 169 (PLVA…PEVA) and 179 to 355 (IAVA…AAHR). GTP is bound by residues 10 to 17 (GRPNVGKS), 57 to 61 (DTGGL), 120 to 123 (NKCE), 185 to 192 (GRPNVGKS), 232 to 236 (DTAGI), and 297 to 300 (NKWD). One can recognise a KH-like domain in the interval 356–441 (KRIATSVVNE…PIRFRWRSKS (86 aa)).

It belongs to the TRAFAC class TrmE-Era-EngA-EngB-Septin-like GTPase superfamily. EngA (Der) GTPase family. Associates with the 50S ribosomal subunit.

GTPase that plays an essential role in the late steps of ribosome biogenesis. The polypeptide is GTPase Der (Synechococcus sp. (strain JA-3-3Ab) (Cyanobacteria bacterium Yellowstone A-Prime)).